The sequence spans 208 residues: Small ribosomal subunit protein uS2 (208 aa).

The segment at 189 to 208 (KPDQDLPVPPEEFETKLVQS) is disordered.

Belongs to the universal ribosomal protein uS2 family.

This is Small ribosomal subunit protein uS2 (rps2) from Pyrobaculum aerophilum (strain ATCC 51768 / DSM 7523 / JCM 9630 / CIP 104966 / NBRC 100827 / IM2).